The following is a 389-amino-acid chain: Acetyl-CoA:oxalate CoA-transferase (389 aa).

His-237 is an active-site residue.

As to quaternary structure, homodimer.

The enzyme catalyses oxalate + acetyl-CoA = oxalyl-CoA + acetate. Its function is as follows. Involved in the catabolism of oxalate and in the adapatation to low pH. ACOCT serves to prime the oxalate-induced acid tolerance response (ATR) cycle by producing substrate for oxalyl-CoA decarboxylase (OXC) and formyl-coenzyme A transferase (FCOCT). Catalyzes the reversible conversion of acetyl-CoA and oxalate to oxalyl-CoA and acetate. It can also use formyl-CoA and oxalate to produce oxalyl-CoA and formate with significantly reduced specific activity. The chain is Acetyl-CoA:oxalate CoA-transferase (uctC) from Acetobacter aceti.